A 137-amino-acid polypeptide reads, in one-letter code: Actin-depolymerizing factor 12 (137 aa).

A Phosphoserine modification is found at S6. One can recognise an ADF-H domain in the interval 7 to 137; sequence GMAVEDECKL…SLDIIKSRAL (131 aa).

It belongs to the actin-binding proteins ADF family. Specifically expressed in pollen.

It is found in the cytoplasm. The protein resides in the cytoskeleton. In terms of biological role, actin-depolymerizing protein. Severs actin filaments (F-actin) and binds to actin monomers. The protein is Actin-depolymerizing factor 12 of Arabidopsis thaliana (Mouse-ear cress).